The chain runs to 525 residues: MSSFSTHNFVAIATFVCWFCCLATAAPLTSKAAYLLKRNSLIEEDASRKLGAKIVLTNEEKVLDDFILAEKRKLIDDSRLNQTEYMPAASFYRSKDFIDTTFAYKIIQDMPKGGALHLHDLAIASLDWVVKNATYRDNVYMCMDKDNDVNLRVLQLIPPDPFCVWKLVATERANSGDVEAFDDWLKKNISYLSTDPVTQYATVDSVWVRFNKYFAQVIGLLFYAPIMRDYYRQALEEFRADNVQYIELRSQLFGFFELDGTVHDAEFGLNLYKSVTEEFQREYPDFIGAKIILSGLRFKSQEEILNEVKIAMDLHKKYPDFFLGYDLVGQEDPNFSLLHYLDALLYPSIQNPPYRLPYFFHAAETNWQETEVDYNLADALLLNTTRVGHGFALIKHPRFTELAKENGVAVEVNPISNQILGLVRDVRNHALVPLIADDYPIVISSDDPGAWEASPLSHDFYVALMDLCGRDTALTFLKQLALNSIRYSAMSDTEKVAAKAKWTTQWDKFVKTSVEGLKPHINDRS.

An N-terminal signal peptide occupies residues 1 to 25 (MSSFSTHNFVAIATFVCWFCCLATA). The N-linked (GlcNAc...) asparagine glycan is linked to Asn81. His117 and His119 together coordinate Zn(2+). Residue Asp120 participates in substrate binding. Asn132 carries N-linked (GlcNAc...) asparagine glycosylation. A disulfide bridge connects residues Cys142 and Cys163. Asn188 carries N-linked (GlcNAc...) asparagine glycosylation. Residues 207–214 (WVRFNKYF) and Gly329 each bind substrate. Asn334 carries N-linked (GlcNAc...) asparagine glycosylation. Residue His361 participates in Zn(2+) binding. Glu364 serves as the catalytic Proton donor. His389 (proton acceptor) is an active-site residue. Residue Asp446 coordinates Zn(2+). Asp447 contacts substrate.

The protein belongs to the metallo-dependent hydrolases superfamily. Adenosine and AMP deaminases family. ADGF subfamily. Zn(2+) is required as a cofactor. As to expression, detected in egg cordons and in the developing central nervous system. Not detected in adult central nervous system (at protein level). Atrial gland.

It is found in the secreted. It catalyses the reaction adenosine + H2O + H(+) = inosine + NH4(+). Functionally, adenosine deaminase that may contribute to the degradation of extracellular adenosine, a signaling molecule that controls a variety of cellular responses. May play a role in the regulation of cell proliferation. The polypeptide is Adenosine deaminase AGSA (Aplysia californica (California sea hare)).